Reading from the N-terminus, the 156-residue chain is MNVIEGAIAAPNAKIAIVIARFNSFINESLLAGALDALKRQGQVSDDNITVVRCPGAYELPLVAQQVAKSDRYDAIVALGSVIRGGTPHFDYVAGECNKGLAQVALEYNTPVAFGVLTVDSIEQAIERAGTKAGNKGAEAALSALEMVNVLSQIES.

5-amino-6-(D-ribitylamino)uracil contacts are provided by residues Phe22, 57 to 59, and 81 to 83; these read AYE and SVI. Residue 86–87 coordinates (2S)-2-hydroxy-3-oxobutyl phosphate; the sequence is GT. Residue His89 is the Proton donor of the active site. Phe114 serves as a coordination point for 5-amino-6-(D-ribitylamino)uracil. Arg128 serves as a coordination point for (2S)-2-hydroxy-3-oxobutyl phosphate.

It belongs to the DMRL synthase family. As to quaternary structure, forms an icosahedral capsid composed of 60 subunits, arranged as a dodecamer of pentamers.

The enzyme catalyses (2S)-2-hydroxy-3-oxobutyl phosphate + 5-amino-6-(D-ribitylamino)uracil = 6,7-dimethyl-8-(1-D-ribityl)lumazine + phosphate + 2 H2O + H(+). Its pathway is cofactor biosynthesis; riboflavin biosynthesis; riboflavin from 2-hydroxy-3-oxobutyl phosphate and 5-amino-6-(D-ribitylamino)uracil: step 1/2. In terms of biological role, catalyzes the formation of 6,7-dimethyl-8-ribityllumazine by condensation of 5-amino-6-(D-ribitylamino)uracil with 3,4-dihydroxy-2-butanone 4-phosphate. This is the penultimate step in the biosynthesis of riboflavin. The sequence is that of 6,7-dimethyl-8-ribityllumazine synthase from Photobacterium profundum (strain SS9).